Here is a 543-residue protein sequence, read N- to C-terminus: Chaperonin GroEL 2 (543 aa).

Residues 29-32 (TLGP), 86-90 (DGTTT), glycine 413, 478-480 (NAA), and aspartate 494 each bind ATP.

The protein belongs to the chaperonin (HSP60) family. In terms of assembly, forms a cylinder of 14 subunits composed of two heptameric rings stacked back-to-back. Interacts with the co-chaperonin GroES.

The protein resides in the cytoplasm. The enzyme catalyses ATP + H2O + a folded polypeptide = ADP + phosphate + an unfolded polypeptide.. Its function is as follows. Together with its co-chaperonin GroES, plays an essential role in assisting protein folding. The GroEL-GroES system forms a nano-cage that allows encapsulation of the non-native substrate proteins and provides a physical environment optimized to promote and accelerate protein folding. This Thermosynechococcus vestitus (strain NIES-2133 / IAM M-273 / BP-1) protein is Chaperonin GroEL 2.